The primary structure comprises 136 residues: Large ribosomal subunit protein uL16c (136 aa).

It belongs to the universal ribosomal protein uL16 family. In terms of assembly, part of the 50S ribosomal subunit.

The protein resides in the plastid. It localises to the chloroplast. The protein is Large ribosomal subunit protein uL16c of Oryza nivara (Indian wild rice).